The primary structure comprises 368 residues: MNIQNDKERLLNGSIDEIEIITTDNNENDTIRNDDILKNSQLREQQQHQQIQQQIQQQKKESSLSTIASVIAFYFFISISLVFLNKILLSDFKFEYPLFITWYQQIISFVSIYIMTSISKSVPALSFLPEFEFKSATASKVLPVTAVLTGMVIFNNLCLEYVEVSFYQVARSLTICFSLILTYIVLKSKTSYRATMACLVVFLGFVLGSAGEVNFSWLGIIFGLLSSFFVALYSIAVKRVLPAVDGNEWRLSIYNTAISIGLIFPLILVSGEANTILDEPLLYSGTFWFYMTVAGLMGYLISISVFMQIKHTSPLTNTISGTVKACVQTILAVVFWGNPISTQNAVGILLVIGGSFWYSMQRFFEMKK.

A run of 9 helical transmembrane segments spans residues 64 to 84 (LSTI…LVFL), 98 to 118 (LFIT…MTSI), 141 to 161 (VLPV…CLEY), 166 to 186 (FYQV…YIVL), 195 to 215 (TMAC…EVNF), 217 to 237 (WLGI…SIAV), 251 to 271 (LSIY…LVSG), 287 to 307 (FWFY…SVFM), and 332 to 352 (AVVF…LLVI).

This sequence belongs to the TPT transporter family. SLC35C subfamily.

The protein resides in the golgi apparatus membrane. The catalysed reaction is GMP(out) + GDP-beta-L-fucose(in) = GMP(in) + GDP-beta-L-fucose(out). Its function is as follows. Antiporter specific for GDP-l-fucose and depending on the concomitant reverse transport of GMP. Involved in GDP-fucose import from the cytoplasm into the Golgi lumen. In Dictyostelium discoideum (Social amoeba), this protein is GDP-fucose transporter 1 (slc35c1).